The primary structure comprises 631 residues: Dolichyl-diphosphooligosaccharide--protein glycosyltransferase subunit 2 (631 aa).

Residues M1–A22 form the signal peptide. Topologically, residues L23–V540 are lumenal. N106 carries N-linked (GlcNAc...) asparagine glycosylation. K154 is covalently cross-linked (Glycyl lysine isopeptide (Lys-Gly) (interchain with G-Cter in ubiquitin)). A helical membrane pass occupies residues V541–I561. Residues R562–T571 are Cytoplasmic-facing. The chain crosses the membrane as a helical span at residues F572–I592. The Lumenal portion of the chain corresponds to Y593–Q596. The chain crosses the membrane as a helical span at residues L597–G617. The Cytoplasmic segment spans residues N618 to H631.

It belongs to the SWP1 family. As to quaternary structure, component of the oligosaccharyltransferase (OST) complex. OST exists in two different complex forms which contain common core subunits RPN1, RPN2, OST48, OST4, DAD1 and TMEM258, either STT3A or STT3B as catalytic subunits, and form-specific accessory subunits. STT3A complex assembly occurs through the formation of 3 subcomplexes. Subcomplex 1 contains RPN1 and TMEM258, subcomplex 2 contains the STT3A-specific subunits STT3A, DC2/OSTC, and KCP2 as well as the core subunit OST4, and subcomplex 3 contains RPN2, DAD1, and OST48. The STT3A complex can form stable complexes with the Sec61 complex or with both the Sec61 and TRAP complexes. Interacts with DDI2. Interacts with TMEM35A/NACHO.

It localises to the endoplasmic reticulum. It is found in the endoplasmic reticulum membrane. Its pathway is protein modification; protein glycosylation. Subunit of the oligosaccharyl transferase (OST) complex that catalyzes the initial transfer of a defined glycan (Glc(3)Man(9)GlcNAc(2) in eukaryotes) from the lipid carrier dolichol-pyrophosphate to an asparagine residue within an Asn-X-Ser/Thr consensus motif in nascent polypeptide chains, the first step in protein N-glycosylation. N-glycosylation occurs cotranslationally and the complex associates with the Sec61 complex at the channel-forming translocon complex that mediates protein translocation across the endoplasmic reticulum (ER). All subunits are required for a maximal enzyme activity. In Mus musculus (Mouse), this protein is Dolichyl-diphosphooligosaccharide--protein glycosyltransferase subunit 2.